Reading from the N-terminus, the 218-residue chain is MPTRSPSVVISDDEPGYDLDLFCIPNHYAEDLEKVFIPHGLIMDRTERLARDVMKEMGGHHIVALCVLKGGYKFFADLLDYIKALNRNSDRSIPMTVDFIRLKSYCNDQSTGDIKVIGGDDLSTLTGKNVLIVEDIIDTGKTMQTLLSLVKQYSPKMVKVASLLVKRTSRSVGYRPDFVGFEIPDKFVVGYALDYNEYFRDLNHVCVISETGKAKYKA.

Residue Lys-69 coordinates GMP. Lys-103 bears the N6-acetyllysine mark. Lys-115 is covalently cross-linked (Glycyl lysine isopeptide (Lys-Gly) (interchain with G-Cter in SUMO1); alternate). Lys-115 is covalently cross-linked (Glycyl lysine isopeptide (Lys-Gly) (interchain with G-Cter in SUMO2); alternate). GMP contacts are provided by residues 134–142 (EDIIDTGKT), Lys-166, 186–188 (KFV), and Asp-194. Asp-138 (proton acceptor) is an active-site residue. Residue Thr-142 is modified to Phosphothreonine. A Mg(2+)-binding site is contributed by Asp-194.

Belongs to the purine/pyrimidine phosphoribosyltransferase family. Homotetramer. Mg(2+) is required as a cofactor.

It localises to the cytoplasm. The catalysed reaction is IMP + diphosphate = hypoxanthine + 5-phospho-alpha-D-ribose 1-diphosphate. It carries out the reaction GMP + diphosphate = guanine + 5-phospho-alpha-D-ribose 1-diphosphate. It functions in the pathway purine metabolism; IMP biosynthesis via salvage pathway; IMP from hypoxanthine: step 1/1. Converts guanine to guanosine monophosphate, and hypoxanthine to inosine monophosphate. Transfers the 5-phosphoribosyl group from 5-phosphoribosylpyrophosphate onto the purine. Plays a central role in the generation of purine nucleotides through the purine salvage pathway. The chain is Hypoxanthine-guanine phosphoribosyltransferase (Hprt1) from Mus musculus (Mouse).